We begin with the raw amino-acid sequence, 217 residues long: Somatotropin (217 aa).

An N-terminal signal peptide occupies residues methionine 1–alanine 26. Histidine 44 contributes to the Zn(2+) binding site. An intrachain disulfide couples cysteine 79 to cysteine 191. Residue serine 132 is modified to Phosphoserine. A Zn(2+)-binding site is contributed by glutamate 200. The cysteines at positions 208 and 215 are disulfide-linked.

The protein belongs to the somatotropin/prolactin family.

The protein localises to the secreted. Functionally, plays an important role in growth control. Its major role in stimulating body growth is to stimulate the liver and other tissues to secrete IGF1. It stimulates both the differentiation and proliferation of myoblasts. It also stimulates amino acid uptake and protein synthesis in muscle and other tissues. In Macaca mulatta (Rhesus macaque), this protein is Somatotropin (GH1).